The sequence spans 35 residues: Conotoxin TxMEKL-0422 (35 aa).

The disordered stretch occupies residues 1 to 35; it reads NPASCCSCADVDPGRASRKTPKGEDQVFIKEKDRC. Residues 21-35 are compositionally biased toward basic and acidic residues; the sequence is PKGEDQVFIKEKDRC.

Post-translationally, contains disulfide bonds. As to expression, expressed by the venom duct.

The protein localises to the secreted. This is Conotoxin TxMEKL-0422 from Conus textile (Cloth-of-gold cone).